The sequence spans 247 residues: MKTPRGSVLVLLLLNLLRVSWAQSNCIRPSIPGIPGIPGKPGSDGKPGTPGTKGEKGLPGLVSHLNENGEKGDPGFPGMPGKVGPKGPIGPKGVPGPPGVRGPKGESGDYKATQKIAFSASRTINHHQRQGQPIRFDHVITNANENYQARSSKFTCKVPGLYFFTYHASSRGQLCVDLMRGRAEPQKVVTFCDYVQNTFQVTTGSIVLKLEKDETVFLQATEKNALVGIEGANSIFSGFMLFPDTEA.

Positions 1-22 (MKTPRGSVLVLLLLNLLRVSWA) are cleaved as a signal peptide. Gln23 bears the Pyrrolidone carboxylic acid mark. 4-hydroxyproline occurs at positions 29, 32, 35, 47, and 50. The interval 30–78 (SIPGIPGIPGKPGSDGKPGTPGTKGEKGLPGLVSHLNENGEKGDPGFPG) is disordered. The Collagen-like domain maps to 39–98 (GKPGSDGKPGTPGTKGEKGLPGLVSHLNENGEKGDPGFPGMPGKVGPKGPIGPKGVPGPP). Low complexity predominate over residues 40 to 52 (KPGSDGKPGTPGT). A 5-hydroxylysine mark is found at Lys53 and Lys56. A 4-hydroxyproline modification is found at Pro59. At Lys71 the chain carries 5-hydroxylysine. Residues Pro77 and Pro80 each carry the 4-hydroxyproline modification. A 5-hydroxylysine mark is found at Lys86 and Lys92. 2 positions are modified to 4-hydroxyproline: Pro95 and Pro98. At Lys104 the chain carries 5-hydroxylysine. Residues 111–247 (KATQKIAFSA…GFMLFPDTEA (137 aa)) form the C1q domain. Cys175 and Cys192 are oxidised to a cystine. 3 residues coordinate Ca(2+): Asp193, Tyr194, and Gln200.

As to quaternary structure, core component of the complement C1 complex, a calcium-dependent complex composed of 1 molecule of the C1Q subcomplex, 2 molecules of C1R and 2 molecules of C1S. The C1Q subcomplex is composed 18 subunits: 3 chains of C1QA, C1QB, and C1QC trimerize to form 6 collagen-like triple helices connected to six globular ligand-recognition modules (C1q domain). In terms of processing, hydroxylated on lysine and proline residues. Hydroxylated lysine residues can be glycosylated. Bovine C1Q contains up to 66.3 hydroxylysine-galactosylglucose residues. Total percentage hydroxylysine residues glycosylated is 92.0%. Contains no hydroxylysine-monosaccharides.

The protein localises to the secreted. It localises to the cell surface. With respect to regulation, the C1Q subcomplex is inhibited by sulfated molecules, such as triterpenoid sulfates, heparan sulfate, or chondroitin sulfates. Functionally, core component of the complement C1 complex, a multiprotein complex that initiates the classical pathway of the complement system, a cascade of proteins that leads to phagocytosis and breakdown of pathogens and signaling that strengthens the adaptive immune system. The classical complement pathway is initiated by the C1Q subcomplex of the C1 complex, which specifically binds IgG or IgM immunoglobulins complexed with antigens, forming antigen-antibody complexes on the surface of pathogens: C1QA, together with C1QB and C1QC, specifically recognizes and binds the Fc regions of IgG or IgM via its C1q domain. Immunoglobulin-binding activates the proenzyme C1R, which cleaves C1S, initiating the proteolytic cascade of the complement system. The C1Q subcomplex is activated by a hexamer of IgG complexed with antigens, while it is activated by a pentameric IgM. The C1Q subcomplex also recognizes and binds phosphatidylserine exposed on the surface of cells undergoing programmed cell death, possibly promoting activation of the complement system. This Bos taurus (Bovine) protein is Complement C1q subcomponent subunit B (C1QB).